We begin with the raw amino-acid sequence, 914 residues long: Caprin-2 (914 aa).

Disordered stretches follow at residues 259–283 (PLPK…PSGL), 298–326 (EFLN…KEDF), 367–411 (KTVD…LPKD), 439–480 (DGES…SSQR), 495–529 (CLSN…PPLY), 608–631 (HRSF…PELN), and 718–747 (GAGT…AYPL). Positions 264–273 (DSQEKTETIK) are enriched in basic and acidic residues. Polar residues predominate over residues 274–283 (PDSQSRPSGL). Basic and acidic residues predominate over residues 370–392 (DIVKRSTTDPKEKRQRKKAEQDS). Positions 469 to 480 (KSPSDILPSSQR) are enriched in polar residues. The segment covering 508-520 (LELHSEDKPRKQA) has biased composition (basic and acidic residues). Residues 610 to 626 (SFTSAKTSSVTTASTQT) show a composition bias toward low complexity. Polar residues predominate over residues 718–738 (GAGTATQRSSAGWSDSSQVSS). A C1q domain is found at 780 to 914 (LTQLRVAFSA…TFSGFLLYQD (135 aa)). Ca(2+) is bound by residues Asp-865 and Glu-871.

This sequence belongs to the caprin family. In terms of assembly, homotrimer; via C1q domain.

The protein resides in the cytoplasm. Its subcellular location is the cell membrane. Promotes phosphorylation of the Wnt coreceptor LRP6, leading to increased activity of the canonical Wnt signaling pathway. Facilitates constitutive LRP6 phosphorylation by CDK14/CCNY during G2/M stage of the cell cycle, which may potentiate cells for Wnt signaling. May regulate the transport and translation of mRNAs, modulating for instance the expression of proteins involved in synaptic plasticity in neurons. Involved in regulation of growth as erythroblasts shift from a highly proliferative state towards their terminal phase of differentiation. May be involved in apoptosis. This Danio rerio (Zebrafish) protein is Caprin-2.